The sequence spans 62 residues: Negative regulatory protein YxlE (62 aa).

2 helical membrane-spanning segments follow: residues 7–27 (MILP…ISCI) and 37–57 (WMWA…FFTV).

Its subcellular location is the cell membrane. In terms of biological role, together with YxlD is important for negative regulation of sigma Y activity. This chain is Negative regulatory protein YxlE (yxlE), found in Bacillus subtilis (strain 168).